The sequence spans 274 residues: NH(3)-dependent NAD(+) synthetase (274 aa).

46–53 (GISGGQDS) contributes to the ATP binding site. A Mg(2+)-binding site is contributed by Asp52. A deamido-NAD(+)-binding site is contributed by Arg140. Thr160 lines the ATP pocket. Glu165 is a binding site for Mg(2+). Deamido-NAD(+)-binding residues include Lys173 and Asp180. Residues Lys189 and Thr211 each coordinate ATP. 260 to 261 (HK) lines the deamido-NAD(+) pocket.

The protein belongs to the NAD synthetase family. As to quaternary structure, homodimer.

The enzyme catalyses deamido-NAD(+) + NH4(+) + ATP = AMP + diphosphate + NAD(+) + H(+). It functions in the pathway cofactor biosynthesis; NAD(+) biosynthesis; NAD(+) from deamido-NAD(+) (ammonia route): step 1/1. Catalyzes the ATP-dependent amidation of deamido-NAD to form NAD. Uses ammonia as a nitrogen source. The polypeptide is NH(3)-dependent NAD(+) synthetase (Listeria monocytogenes serovar 1/2a (strain ATCC BAA-679 / EGD-e)).